The sequence spans 95 residues: FMRFamide-like neuropeptides 16 (95 aa).

Residues 1 to 24 (MSLSGFEFSSIIAVLLLLIQLSSA) form the signal peptide. Residues 25–58 (AVLPVDYASQYGVASADEMTALPEEGSLFAERPA) constitute a propeptide that is removed on maturation. Phenylalanine amide occurs at positions 67, 77, and 87. Residues 90-95 (SAPFEQ) constitute a propeptide that is removed on maturation.

The protein belongs to the FARP (FMRFamide related peptide) family.

Its subcellular location is the secreted. FMRFamides and FMRFamide-like peptides are neuropeptides. AQTFVRF-amide inhibits the activity of dissected pharyngeal myogenic muscle system. This is FMRFamide-like neuropeptides 16 (flp-16) from Caenorhabditis briggsae.